The primary structure comprises 185 residues: UPF0149 protein XF_2010 (185 aa).

It belongs to the UPF0149 family.

The polypeptide is UPF0149 protein XF_2010 (Xylella fastidiosa (strain 9a5c)).